A 687-amino-acid polypeptide reads, in one-letter code: Threonine--tRNA ligase (687 aa).

One can recognise a TGS domain in the interval 1–67; the sequence is MAHLIEAAPN…EQDSKFTPVP (67 aa). Positions 266-572 are catalytic; that stretch reads DHRRLGAELD…LLEHYAGAFP (307 aa). The Zn(2+) site is built by cysteine 371, histidine 422, and histidine 549.

The protein belongs to the class-II aminoacyl-tRNA synthetase family. In terms of assembly, homodimer. It depends on Zn(2+) as a cofactor.

The protein resides in the cytoplasm. It catalyses the reaction tRNA(Thr) + L-threonine + ATP = L-threonyl-tRNA(Thr) + AMP + diphosphate + H(+). Functionally, catalyzes the attachment of threonine to tRNA(Thr) in a two-step reaction: L-threonine is first activated by ATP to form Thr-AMP and then transferred to the acceptor end of tRNA(Thr). Also edits incorrectly charged L-seryl-tRNA(Thr). The chain is Threonine--tRNA ligase from Corynebacterium diphtheriae (strain ATCC 700971 / NCTC 13129 / Biotype gravis).